The primary structure comprises 217 residues: Homologous-pairing protein 2 homolog (217 aa).

Residues 84–152 (ADLHGLDASI…RLKNIKAATN (69 aa)) are a coiled coil. The DNA-binding stretch occupies residues 118–182 (TSALTTPEMQ…WRKRKRMTTE (65 aa)).

The protein belongs to the HOP2 family. As to quaternary structure, interacts with the DNA-binding domain of the nuclear receptors NR3C1/GR, ESR2/ER-beta, THRB and RXRA. Forms a stable heterodimer with MND1. Interacts with PSMC3/TBP1. In terms of processing, phosphorylated by PKA, PKC and MAPK. As to expression, highly expressed in testis and more specifically in spermatocytes. Detected in spleen, ovary and thymus.

The protein localises to the nucleus. In terms of biological role, plays an important role in meiotic recombination. Stimulates DMC1-mediated strand exchange required for pairing homologous chromosomes during meiosis. The complex PSMC3IP/MND1 binds DNA, stimulates the recombinase activity of DMC1 as well as DMC1 D-loop formation from double-strand DNA. This complex stabilizes presynaptic RAD51 and DMC1 filaments formed on single strand DNA to capture double-strand DNA. This complex stimulates both synaptic and presynaptic critical steps in RAD51 and DMC1-promoted homologous pairing. May inhibit HIV-1 viral protein TAT activity and modulate the activity of proteasomes through association with PSMC3. This is Homologous-pairing protein 2 homolog (Psmc3ip) from Mus musculus (Mouse).